The sequence spans 396 residues: Elongation factor Tu (396 aa).

The tr-type G domain occupies 10-206; the sequence is KPHVNVGTIG…ALDTFIPEPT (197 aa). Residues 19–26 are G1; the sequence is GHVDHGKT. 19-26 provides a ligand contact to GTP; that stretch reads GHVDHGKT. Threonine 26 is a Mg(2+) binding site. The segment at 60–64 is G2; that stretch reads GITIS. The segment at 81–84 is G3; the sequence is DCPG. GTP is bound by residues 81–85 and 136–139; these read DCPGH and NKAD. The tract at residues 136-139 is G4; that stretch reads NKAD. The tract at residues 174–176 is G5; the sequence is SAR.

The protein belongs to the TRAFAC class translation factor GTPase superfamily. Classic translation factor GTPase family. EF-Tu/EF-1A subfamily. In terms of assembly, monomer.

It localises to the cytoplasm. The enzyme catalyses GTP + H2O = GDP + phosphate + H(+). In terms of biological role, GTP hydrolase that promotes the GTP-dependent binding of aminoacyl-tRNA to the A-site of ribosomes during protein biosynthesis. This Xanthomonas oryzae pv. oryzae (strain MAFF 311018) protein is Elongation factor Tu.